Reading from the N-terminus, the 449-residue chain is Intestinal acid phosphatase (449 aa).

An N-terminal signal peptide occupies residues 1–19 (MVSAISIVAIFALEGFVTT). The Extracellular portion of the chain corresponds to 20-428 (YSDGTKDLVF…TDLNKSSSFA (409 aa)). His-36 serves as the catalytic Nucleophile. Asp-321 functions as the Proton donor in the catalytic mechanism. A helical transmembrane segment spans residues 429–449 (TVSMLFIAAILAINNNFLGLF).

It belongs to the histidine acid phosphatase family. As to quaternary structure, homodimer. The N-terminus is blocked. Expressed in the intestine, specifically on the edge of the gut lumen, in the 14 posterior cells of the intestine.

The protein resides in the membrane. The catalysed reaction is a phosphate monoester + H2O = an alcohol + phosphate. Functionally, acid phosphatase required for normal growth and development. Specifically required for normal gut differentiation. In Caenorhabditis elegans, this protein is Intestinal acid phosphatase.